The sequence spans 229 residues: Prolactin (229 aa).

Positions Met-1–Ser-30 are cleaved as a signal peptide. Cys-34 and Cys-41 form a disulfide bridge. 3 positions are modified to phosphoserine: Ser-56, Ser-64, and Ser-120. Disulfide bonds link Cys-88/Cys-204 and Cys-221/Cys-229.

The protein belongs to the somatotropin/prolactin family. As to quaternary structure, interacts with PRLR.

The protein localises to the secreted. Functionally, prolactin acts primarily on the mammary gland by promoting lactation. The sequence is that of Prolactin (PRL) from Capra hircus (Goat).